Here is a 624-residue protein sequence, read N- to C-terminus: Chaperone protein HtpG (624 aa).

The tract at residues 1-336 is a; substrate-binding; sequence MKGQETRGFQ…SNDLPLNVSR (336 aa). Residues 337–552 form a b region; that stretch reads EILQDSTVTR…ADEMSTQMAK (216 aa). The segment at 553–624 is c; that stretch reads LFAAAGQAVP…IRRMNQLLVS (72 aa).

It belongs to the heat shock protein 90 family. In terms of assembly, homodimer.

The protein localises to the cytoplasm. Functionally, molecular chaperone. Has ATPase activity. In Citrobacter koseri (strain ATCC BAA-895 / CDC 4225-83 / SGSC4696), this protein is Chaperone protein HtpG.